Here is a 151-residue protein sequence, read N- to C-terminus: IFN signaling evasion protein OPG029 (151 aa).

This sequence belongs to the orthopoxvirus OPG029 family. Interacts with host TANK, TBKBP1 and AZI2; these interactions prevent interferon production. Interacts with host STAT2.

Prevents establishment of cellular antiviral state by blocking virus-induced phosphorylation and activation of interferon regulatory factors 3/IRF3 and 7/IRF7, transcription factors critical for the induction of interferons alpha and beta. This blockage is produced through the inhibition of host TBK1, by binding host TBK1 adapter proteins TBKBP1 and AZI2, thereby producing a strong inhibition of the phosphorylation and activation of IRF3 and IRF7. Also acts as an inhibitor of the cellular response to type I IFN by interacting with host STAT2. Mechanistically, exerts its inhibitory effect after host ISGF3 complex (composed of STAT1, STAT2 and IRF9) binding to the interferon stimulated response element (ISRE). This chain is IFN signaling evasion protein OPG029 (OPG029), found in Vaccinia virus (strain Western Reserve) (VACV).